The following is a 137-amino-acid chain: Large-conductance mechanosensitive channel (137 aa).

The next 2 helical transmembrane spans lie at 10 to 30 (FAMR…AAFG) and 76 to 96 (GVFI…FVAI).

It belongs to the MscL family. As to quaternary structure, homopentamer.

The protein localises to the cell inner membrane. Its function is as follows. Channel that opens in response to stretch forces in the membrane lipid bilayer. May participate in the regulation of osmotic pressure changes within the cell. In Salmonella typhimurium (strain LT2 / SGSC1412 / ATCC 700720), this protein is Large-conductance mechanosensitive channel.